We begin with the raw amino-acid sequence, 585 residues long: YTH domain-containing family protein 3 (585 aa).

Disordered stretches follow at residues 1–51, 244–277, and 304–350; these read MSAT…SYPP, KPAK…MNIG, and PQPL…QPQL. Residue Ser2 is modified to N-acetylserine. Residues 15–24 show a composition bias toward polar residues; the sequence is NKVSVQNGSI. Position 23 is a phosphoserine (Ser23). Over residues 244–254 the composition is skewed to basic residues; that stretch reads KPAKPQPKLKP. Over residues 329 to 350 the composition is skewed to low complexity; the sequence is QQQQGPQPQAQPHQVQSQQPQL. Residues 416-550 enclose the YTH domain; the sequence is GRVFIIKSYS…EKAKQVLKII (135 aa). RNA-binding positions include 422-424, Asp428, 438-439, Asn468, Trp492, and Trp497; these read KSY and WC.

It belongs to the YTHDF family. YTHDF3 subfamily. In terms of assembly, interacts with CNOT1; promoting recruitment of the CCR4-NOT complex. Interacts with YTHDF1. Interacts with YTHDF2. Interacts with PAN3.

Its subcellular location is the cytoplasm. The protein localises to the cytosol. The protein resides in the P-body. It is found in the stress granule. In terms of biological role, specifically recognizes and binds N6-methyladenosine (m6A)-containing RNAs, and regulates their stability. M6A is a modification present at internal sites of mRNAs and some non-coding RNAs and plays a role in mRNA stability and processing. Acts as a regulator of mRNA stability by promoting degradation of m6A-containing mRNAs via interaction with the CCR4-NOT complex or PAN3. The YTHDF paralogs (YTHDF1, YTHDF2 and YTHDF3) share m6A-containing mRNAs targets and act redundantly to mediate mRNA degradation and cellular differentiation. Acts as a negative regulator of type I interferon response by down-regulating interferon-stimulated genes (ISGs) expression: acts by binding to FOXO3 mRNAs. Binds to FOXO3 mRNAs independently of METTL3-mediated m6A modification. Can also act as a regulator of mRNA stability in cooperation with YTHDF2 by binding to m6A-containing mRNA and promoting their degradation. Recognizes and binds m6A-containing circular RNAs (circRNAs); circRNAs are generated through back-splicing of pre-mRNAs, a non-canonical splicing process promoted by dsRNA structures across circularizing exons. Promotes formation of phase-separated membraneless compartments, such as P-bodies or stress granules, by undergoing liquid-liquid phase separation upon binding to mRNAs containing multiple m6A-modified residues: polymethylated mRNAs act as a multivalent scaffold for the binding of YTHDF proteins, juxtaposing their disordered regions and thereby leading to phase separation. The resulting mRNA-YTHDF complexes then partition into different endogenous phase-separated membraneless compartments, such as P-bodies, stress granules or neuronal RNA granules. May also recognize and bind N1-methyladenosine (m1A)-containing mRNAs: inhibits trophoblast invasion by binding to m1A-methylated transcripts of IGF1R, promoting their degradation. The protein is YTH domain-containing family protein 3 of Mus musculus (Mouse).